The primary structure comprises 261 residues: Thiamine thiazole synthase (261 aa).

Residues Ser33, 52 to 53 (ER), Gly60, Val124, and 152 to 154 (HVD) contribute to the NAD(+) site. Asp154 and His169 together coordinate Fe cation. Met219 contacts NAD(+). Arg229 serves as a coordination point for glycine.

This sequence belongs to the THI4 family. In terms of assembly, homooctamer; tetramer of dimers. It depends on Fe(2+) as a cofactor.

The catalysed reaction is hydrogen sulfide + glycine + NAD(+) = ADP-5-ethyl-4-methylthiazole-2-carboxylate + nicotinamide + 3 H2O + H(+). Its pathway is cofactor biosynthesis; thiamine diphosphate biosynthesis. Involved in the biosynthesis of the thiazole moiety of thiamine. Catalyzes the conversion of NAD and glycine to adenosine diphosphate 5-(2-hydroxyethyl)-4-methylthiazole-2-carboxylate (ADT), an adenylated thiazole intermediate, using free sulfide as a source of sulfur. The polypeptide is Thiamine thiazole synthase (Pyrobaculum arsenaticum (strain DSM 13514 / JCM 11321 / PZ6)).